The following is a 105-amino-acid chain: uncharacterized protein (105 aa).

Residues 1–27 are disordered; sequence MQSPAMKRIKSSSHSRWDGSGSVNEMP.

Its subcellular location is the mitochondrion. This is an uncharacterized protein from Arabidopsis thaliana (Mouse-ear cress).